A 141-amino-acid polypeptide reads, in one-letter code: Molybdopterin synthase catalytic subunit 2 (141 aa).

Substrate contacts are provided by residues 37 to 39 (MIR), 103 to 104 (HR), Lys119, and 126 to 128 (KHQ).

The protein belongs to the MoaE family. As to quaternary structure, heterotetramer of 2 MoaD subunits and 2 MoaE subunits. Also stable as homodimer. The enzyme changes between these two forms during catalysis.

The enzyme catalyses 2 [molybdopterin-synthase sulfur-carrier protein]-C-terminal-Gly-aminoethanethioate + cyclic pyranopterin phosphate + H2O = molybdopterin + 2 [molybdopterin-synthase sulfur-carrier protein]-C-terminal Gly-Gly + 2 H(+). It participates in cofactor biosynthesis; molybdopterin biosynthesis. Converts molybdopterin precursor Z into molybdopterin. This requires the incorporation of two sulfur atoms into precursor Z to generate a dithiolene group. The sulfur is provided by MoaD. The polypeptide is Molybdopterin synthase catalytic subunit 2 (moaE2) (Mycobacterium tuberculosis (strain CDC 1551 / Oshkosh)).